We begin with the raw amino-acid sequence, 80 residues long: Dermaseptin-DA3 (80 aa).

A signal peptide spans 1 to 22 (MAFLKKSLFLVLFLGLVSLSIC). Residues 23–42 (EEKRENEDEEEQEDDEQSEE) constitute a propeptide that is removed on maturation. Residues 24–48 (EKRENEDEEEQEDDEQSEEKRGMWS) form a disordered region. Over residues 29–40 (EDEEEQEDDEQS) the composition is skewed to acidic residues. Leu-77 is modified (leucine amide). Residues 79-80 (EQ) constitute a propeptide that is removed on maturation.

It belongs to the frog skin active peptide (FSAP) family. Dermaseptin subfamily. As to expression, expressed by the skin glands.

Its subcellular location is the secreted. Functionally, possesses a potent antimicrobial activity against Gram-positive and Gram-negative bacteria. Probably acts by disturbing membrane functions with its amphipathic structure. The sequence is that of Dermaseptin-DA3 from Agalychnis dacnicolor (Giant Mexican leaf frog).